The sequence spans 218 residues: Mitochondrial import inner membrane translocase subunit TIM17-1 (218 aa).

The next 4 membrane-spanning stretches (helical) occupy residues Val-19–Ile-36, Phe-66–Tyr-82, Pro-89–Leu-105, and Ala-116–Leu-133.

This sequence belongs to the Tim17/Tim22/Tim23 family. As to quaternary structure, component of the TIM17:23 complex at least composed of TIM23, TIM17 and TIM50. The complex interacts with the TIM44 component of the PAM complex. As to expression, expressed in flowers, leaves and cotyledons, and at very low levels in roots.

The protein resides in the mitochondrion inner membrane. Its function is as follows. Essential component of the TIM17:23 complex, a complex that mediates the translocation of transit peptide-containing proteins across the mitochondrial inner membrane. Links the inner and outer membranes. This chain is Mitochondrial import inner membrane translocase subunit TIM17-1 (TIM17-1), found in Arabidopsis thaliana (Mouse-ear cress).